The primary structure comprises 309 residues: UDP-N-acetylenolpyruvoylglucosamine reductase (309 aa).

Positions 40-204 (LGGKVPLFAI…LQATFKLKKG (165 aa)) constitute an FAD-binding PCMH-type domain. Residue R182 is part of the active site. S233 (proton donor) is an active-site residue. E304 is a catalytic residue.

Belongs to the MurB family. Requires FAD as cofactor.

The protein resides in the cytoplasm. The catalysed reaction is UDP-N-acetyl-alpha-D-muramate + NADP(+) = UDP-N-acetyl-3-O-(1-carboxyvinyl)-alpha-D-glucosamine + NADPH + H(+). It participates in cell wall biogenesis; peptidoglycan biosynthesis. Cell wall formation. The sequence is that of UDP-N-acetylenolpyruvoylglucosamine reductase from Fervidobacterium nodosum (strain ATCC 35602 / DSM 5306 / Rt17-B1).